A 514-amino-acid chain; its full sequence is Extracellular exo-inulinase (514 aa).

The first 18 residues, 1–18, serve as a signal peptide directing secretion; the sequence is MRAFLALIFLTFVMNVES. Residues 33–34 and Q52 contribute to the substrate site; that span reads ND. D34 acts as the Nucleophile in catalysis. N56 carries an N-linked (GlcNAc...) asparagine glycan. Residues W60 and S95 each coordinate substrate. N-linked (GlcNAc...) asparagine glycosylation is found at N104 and N110. Residue 162–163 participates in substrate binding; that stretch reads RD. N-linked (GlcNAc...) asparagine glycosylation is found at N197 and N203. The substrate site is built by E214 and W300. The active-site Proton donor/acceptor is E214. N357, N371, N389, and N422 each carry an N-linked (GlcNAc...) asparagine glycan.

Belongs to the glycosyl hydrolase 32 family.

It is found in the secreted. It catalyses the reaction Hydrolysis of terminal, non-reducing (2-&gt;1)- and (2-&gt;6)-linked beta-D-fructofuranose residues in fructans.. In terms of biological role, exo-inulinase involved in utilization of the plant storage polymer inulin, consisting of fructooligosaccharides with a degree of polymerization (DP) value from 2 to 60. Splits off terminal fructose units successively from the non-reducing end of the inulin molecule. The protein is Extracellular exo-inulinase of Meyerozyma guilliermondii (strain ATCC 6260 / CBS 566 / DSM 6381 / JCM 1539 / NBRC 10279 / NRRL Y-324) (Yeast).